The primary structure comprises 475 residues: 3-hydroxyadipyl-CoA dehydrogenase (475 aa).

The protein belongs to the 3-hydroxyacyl-CoA dehydrogenase family. Homotrimer.

It carries out the reaction (3S)-3-hydroxyadipyl-CoA + NAD(+) = 3-oxoadipyl-CoA + NADH + H(+). The protein operates within aromatic compound metabolism; phenylacetate degradation. Its function is as follows. Catalyzes the oxidation of 3-hydroxyadipyl-CoA to yield 3-oxoadipyl-CoA. This chain is 3-hydroxyadipyl-CoA dehydrogenase (paaH), found in Escherichia coli (strain K12).